The primary structure comprises 250 residues: Flavin-dependent thymidylate synthase (250 aa).

In terms of domain architecture, ThyX spans 7–233 (LSVELIACSS…PTVFGDFEIE (227 aa)). Residues 92 to 95 (ELVR), 103 to 107 (QLSQR), and Arg172 each bind dUMP. Residues 95-97 (RHR) and Gln103 each bind FAD. The ThyX motif signature appears at 95 to 105 (RHRHFSFSQLS). FAD is bound by residues 188–190 (NFR) and His194. DUMP is bound at residue Arg199. The active-site Involved in ionization of N3 of dUMP, leading to its activation is the Arg199.

The protein belongs to the thymidylate synthase ThyX family. Homotetramer. FAD is required as a cofactor.

The catalysed reaction is dUMP + (6R)-5,10-methylene-5,6,7,8-tetrahydrofolate + NADPH + H(+) = dTMP + (6S)-5,6,7,8-tetrahydrofolate + NADP(+). It functions in the pathway pyrimidine metabolism; dTTP biosynthesis. Catalyzes the reductive methylation of 2'-deoxyuridine-5'-monophosphate (dUMP) to 2'-deoxythymidine-5'-monophosphate (dTMP) while utilizing 5,10-methylenetetrahydrofolate (mTHF) as the methyl donor, and NADPH and FADH(2) as the reductant. This chain is Flavin-dependent thymidylate synthase, found in Corynebacterium glutamicum (strain ATCC 13032 / DSM 20300 / JCM 1318 / BCRC 11384 / CCUG 27702 / LMG 3730 / NBRC 12168 / NCIMB 10025 / NRRL B-2784 / 534).